We begin with the raw amino-acid sequence, 303 residues long: Monoglyceride lipase (303 aa).

A Phosphothreonine modification is found at Thr10. Position 58 is a 3'-nitrotyrosine (Tyr58). The Nucleophile role is filled by Ser122. Ser189 bears the Phosphoserine mark. Active-site charge relay system residues include Asp239 and His269.

It belongs to the AB hydrolase superfamily. Monoacylglycerol lipase family. In terms of assembly, homodimer. In terms of tissue distribution, ubiquitous. Highly expressed in adipose tissue, adrenal gland, ovary, heart, spleen, lung, skeletal muscle, kidney and testis. Highly expressed throughout the brain.

The protein localises to the cytoplasm. It is found in the cytosol. It localises to the membrane. It carries out the reaction Hydrolyzes glycerol monoesters of long-chain fatty acids.. The enzyme catalyses a 1-acylglycerol + H2O = glycerol + a fatty acid + H(+). It catalyses the reaction a 2-acylglycerol + H2O = glycerol + a fatty acid + H(+). The catalysed reaction is 1-octanoylglycerol + H2O = octanoate + glycerol + H(+). It carries out the reaction 2-(5Z,8Z,11Z,14Z-eicosatetraenoyl)-glycerol + H2O = glycerol + (5Z,8Z,11Z,14Z)-eicosatetraenoate + H(+). The enzyme catalyses 1-decanoylglycerol + H2O = decanoate + glycerol + H(+). It catalyses the reaction 1-dodecanoylglycerol + H2O = dodecanoate + glycerol + H(+). The catalysed reaction is 1-tetradecanoylglycerol + H2O = tetradecanoate + glycerol + H(+). It carries out the reaction 2-hexadecanoylglycerol + H2O = glycerol + hexadecanoate + H(+). The enzyme catalyses 1-(9Z-octadecenoyl)-glycerol + H2O = glycerol + (9Z)-octadecenoate + H(+). It catalyses the reaction 2-(9Z-octadecenoyl)-glycerol + H2O = glycerol + (9Z)-octadecenoate + H(+). The catalysed reaction is 2-(9Z,12Z-octadecadienoyl)-glycerol + H2O = (9Z,12Z)-octadecadienoate + glycerol + H(+). It carries out the reaction 1-(5Z,8Z,11Z,14Z-eicosatetraenoyl)-glycerol + H2O = glycerol + (5Z,8Z,11Z,14Z)-eicosatetraenoate + H(+). The enzyme catalyses 1-(9Z,12Z-octadecadienoyl)-glycerol + H2O = (9Z,12Z)-octadecadienoate + glycerol + H(+). It catalyses the reaction 1-hexadecanoylglycerol + H2O = glycerol + hexadecanoate + H(+). The catalysed reaction is 1-octadecanoylglycerol + H2O = octadecanoate + glycerol + H(+). It carries out the reaction prostaglandin E2 1-glyceryl ester + H2O = prostaglandin E2 + glycerol + H(+). The enzyme catalyses prostaglandin D2-1-glycerol ester + H2O = prostaglandin D2 + glycerol + H(+). It catalyses the reaction 2-glyceryl-15-deoxy-Delta(12,14)-prostaglandin J2 + H2O = 15-deoxy-Delta(12,14)-prostaglandin J2 + glycerol + H(+). The catalysed reaction is prostaglandin F2alpha 1-glyceryl ester + H2O = prostaglandin F2alpha + glycerol + H(+). It participates in glycerolipid metabolism; triacylglycerol degradation. In terms of biological role, converts monoacylglycerides to free fatty acids and glycerol. Hydrolyzes the endocannabinoid 2-arachidonoylglycerol, and thereby contributes to the regulation of endocannabinoid signaling, nociperception and perception of pain. Regulates the levels of fatty acids that serve as signaling molecules and promote cancer cell migration, invasion and tumor growth. This is Monoglyceride lipase from Rattus norvegicus (Rat).